Reading from the N-terminus, the 451-residue chain is UPF0210 protein CLL_A1718 (451 aa).

The protein belongs to the UPF0210 family. As to quaternary structure, homodimer.

This Clostridium botulinum (strain Eklund 17B / Type B) protein is UPF0210 protein CLL_A1718.